A 98-amino-acid chain; its full sequence is NADH-ubiquinone oxidoreductase chain 4L (98 aa).

A run of 3 helical transmembrane segments spans residues 2–22, 29–49, and 61–81; these read PSISTNIILAFTAALTGMLVF, SLLCLEGMMLSMFILSTLTIM, and ILLLVFAACEAAIGLALLVMM.

It belongs to the complex I subunit 4L family. Core subunit of respiratory chain NADH dehydrogenase (Complex I) which is composed of 45 different subunits.

It localises to the mitochondrion inner membrane. It catalyses the reaction a ubiquinone + NADH + 5 H(+)(in) = a ubiquinol + NAD(+) + 4 H(+)(out). Functionally, core subunit of the mitochondrial membrane respiratory chain NADH dehydrogenase (Complex I) which catalyzes electron transfer from NADH through the respiratory chain, using ubiquinone as an electron acceptor. Part of the enzyme membrane arm which is embedded in the lipid bilayer and involved in proton translocation. This is NADH-ubiquinone oxidoreductase chain 4L (MT-ND4L) from Lepilemur seali (Seal's sportive lemur).